The sequence spans 284 residues: Bifunctional protein FolD 2 (284 aa).

Residues 166–168 and I232 each bind NADP(+); that span reads GAS.

This sequence belongs to the tetrahydrofolate dehydrogenase/cyclohydrolase family. As to quaternary structure, homodimer.

It carries out the reaction (6R)-5,10-methylene-5,6,7,8-tetrahydrofolate + NADP(+) = (6R)-5,10-methenyltetrahydrofolate + NADPH. The catalysed reaction is (6R)-5,10-methenyltetrahydrofolate + H2O = (6R)-10-formyltetrahydrofolate + H(+). It participates in one-carbon metabolism; tetrahydrofolate interconversion. Catalyzes the oxidation of 5,10-methylenetetrahydrofolate to 5,10-methenyltetrahydrofolate and then the hydrolysis of 5,10-methenyltetrahydrofolate to 10-formyltetrahydrofolate. In Colwellia psychrerythraea (strain 34H / ATCC BAA-681) (Vibrio psychroerythus), this protein is Bifunctional protein FolD 2.